The primary structure comprises 573 residues: MHALSGFSLVSLLSLGYLSWDWAKPGLVADGPAEAEDQPSAAPPQPPHIIFILTDDQGYHDVGYHGSDIETPTLDRLAAEGVKLENYYIQPICTPSRSQLLTGRYQIHTGLQHSIIRPRQPNCLPLDQVTLPQKLQEAGYSTHMVGKWHLGFYRKECLPTRRGFDTFLGSLTGNVDYYTYDNCDGPGVCGFDLHEGESVAWGLSGQYSTMLYAQRASHILASHSPQKPLFLYVAFQAVHTPLQSPREYLYRYRTMGNVARRKYAAMVTCMDEAVRNITWALKRYGFYNNSVIIFSSDNGGQTFSGGSNWPLRGRKGTYWEGGVRGLGFVHSPLLKKKRRTSRALVHITDWYPTLVGLAGGTTSAADGLDGYDVWPAISEGRASPRTEILHNIDPLYNHARHGSLEGGFGIWNTAVQAAIRVGEWKLLTGDPGYGDWIPPQTLASFPGSWWNLERMASIRQAVWLFNISADPYEREDLADQRPDVVRTLLARLADYNRTAIPVRYPAANPRAHPDFNGGAWGPWASDEDEEEEDEEEEGRARSFPRGRRKKKCKICKLRSFFRKLNTRLMSHRI.

An N-terminal signal peptide occupies residues 1-23; sequence MHALSGFSLVSLLSLGYLSWDWA. Aspartate 55, aspartate 56, and cysteine 93 together coordinate Ca(2+). Cysteine 93 acts as the Nucleophile in catalysis. Cysteine 93 is subject to 3-oxoalanine (Cys). Lysine 147 is a binding site for substrate. Histidine 149 is a catalytic residue. Residue histidine 239 coordinates substrate. N-linked (GlcNAc...) asparagine glycans are attached at residues asparagine 276 and asparagine 288. Ca(2+)-binding residues include aspartate 297 and asparagine 298. Lysine 315 provides a ligand contact to substrate. N-linked (GlcNAc...) asparagine glycans are attached at residues asparagine 466 and asparagine 496. The interval 506 to 550 is disordered; the sequence is AANPRAHPDFNGGAWGPWASDEDEEEEDEEEEGRARSFPRGRRKK. Positions 525 to 537 are enriched in acidic residues; it reads SDEDEEEEDEEEE.

Belongs to the sulfatase family. Ca(2+) is required as a cofactor. In terms of processing, the oxidation of Cys-93 residue to 3-oxoalanine (also known as C(alpha)-formylglycine) by SUMF1/Sulfatase-modifying factor 1, seems critical for catalytic activity.

It is found in the secreted. The protein resides in the endoplasmic reticulum. In terms of biological role, displays arylsulfatase activity at neutral pH, when co-expressed with SUMF1; arylsulfatase activity is measured in the secretion medium of retinal cell line, but no activity is recorded when measured in cell extracts. This Rattus norvegicus (Rat) protein is Arylsulfatase I (Arsi).